A 402-amino-acid polypeptide reads, in one-letter code: Bacillibactin exporter (402 aa).

Helical transmembrane passes span 4 to 24, 39 to 59, 69 to 89, 104 to 124, 162 to 182, 212 to 232, 247 to 267, 278 to 298, 302 to 322, 342 to 362, and 368 to 388; these read IIAL…LIPV, VSLI…IAGY, ILLP…FAST, LQGI…GDLF, FVPF…VLFL, WLYT…GVLF, VAKG…SFIA, MKFC…ALWW, FYFL…ALPA, FYNS…AALM, and IIFI…LFTV.

It belongs to the major facilitator superfamily.

It localises to the cell membrane. Functionally, involved in secretion of bacillibactin. The sequence is that of Bacillibactin exporter (ymfD) from Bacillus subtilis (strain 168).